Here is a 349-residue protein sequence, read N- to C-terminus: Phenylalanine--tRNA ligase alpha subunit (349 aa).

Glutamate 259 is a binding site for Mg(2+).

The protein belongs to the class-II aminoacyl-tRNA synthetase family. Phe-tRNA synthetase alpha subunit type 1 subfamily. As to quaternary structure, tetramer of two alpha and two beta subunits. Requires Mg(2+) as cofactor.

It is found in the cytoplasm. It carries out the reaction tRNA(Phe) + L-phenylalanine + ATP = L-phenylalanyl-tRNA(Phe) + AMP + diphosphate + H(+). The polypeptide is Phenylalanine--tRNA ligase alpha subunit (Lactobacillus helveticus (strain DPC 4571)).